Here is a 243-residue protein sequence, read N- to C-terminus: LexA repressor (243 aa).

The interval 1–30 (MSDDTGEFTDGSTESPADADGAGRRRAVDN) is disordered. Positions 21–30 (GAGRRRAVDN) are enriched in basic and acidic residues. A DNA-binding region (H-T-H motif) is located at residues 56 to 76 (IREIGDAVGLTSTSSVAHQLR). Catalysis depends on for autocatalytic cleavage activity residues Ser167 and Lys204.

This sequence belongs to the peptidase S24 family. Homodimer.

The catalysed reaction is Hydrolysis of Ala-|-Gly bond in repressor LexA.. Functionally, represses a number of genes involved in the response to DNA damage (SOS response), including recA and lexA. In the presence of single-stranded DNA, RecA interacts with LexA causing an autocatalytic cleavage which disrupts the DNA-binding part of LexA, leading to derepression of the SOS regulon and eventually DNA repair. The chain is LexA repressor from Mycolicibacterium smegmatis (strain ATCC 700084 / mc(2)155) (Mycobacterium smegmatis).